The sequence spans 309 residues: Mitochondrial brown fat uncoupling protein 1 (309 aa).

Topologically, residues 1 to 10 (MLRAPGSDAP) are mitochondrial intermembrane. The helical transmembrane segment at 11-32 (PTLSVRIAAAAGAACLADMITF) threads the bilayer. 3 Solcar repeats span residues 11–104 (PTLS…VREW), 113–203 (ASLG…MKEA), and 212–297 (DDLP…LKRE). Residues 33–75 (PLDTAKVRLQIQGEGQGQPPRAPRYRGVLGTVATLARTEGLQK) are Mitochondrial matrix-facing. Arg58 lines the fatty acid 16:0 pocket. A helical transmembrane segment spans residues 76-98 (LYSGLPAGLQRQVGFASLRIGLY). The Mitochondrial intermembrane segment spans residues 99–118 (DSVREWLSPGQGAAASLGSR). The helical transmembrane segment at 119-135 (ISAGVMTGGAAVFIGQP) threads the bilayer. The Mitochondrial matrix portion of the chain corresponds to 136 to 180 (TEVVKVRLQAQSHLHGRKPRYTGTYNAYRIIATTEGLTGLWKGTT). Residues 181-197 (PNLMRNVIINCTELVTY) traverse the membrane as a helical segment. The Mitochondrial intermembrane portion of the chain corresponds to 198 to 214 (DLMKEALVKNHLLADDL). A helical membrane pass occupies residues 215–234 (PCHFLSALVAGFCTTVLSSP). The Mitochondrial matrix segment spans residues 235–268 (VDVVKTRFVNSVPEQYTSVPNCAMTMLTKEGPLA). Cys256 is modified (cysteine sulfenic acid (-SOH)). The chain crosses the membrane as a helical span at residues 269-291 (FFKGFVPSFLRLGSWNVIMFVCF). Lys271 contributes to the fatty acid 16:0 binding site. Topologically, residues 292-309 (EQLKRELMKSGRTVDCAT) are mitochondrial intermembrane.

This sequence belongs to the mitochondrial carrier (TC 2.A.29) family. Most probably functions as a monomer. Binds one purine nucleotide per monomer. However, has also been suggested to function as a homodimer or a homotetramer. Tightly associates with cardiolipin in the mitochondrion inner membrane; may stabilize and regulate its activity. May undergo sulfenylation upon cold exposure. May increase the sensitivity of UCP1 thermogenic function to the activation by noradrenaline probably through structural effects. In terms of processing, may undergo ubiquitin-mediated proteasomal degradation.

The protein resides in the mitochondrion inner membrane. The catalysed reaction is H(+)(in) = H(+)(out). With respect to regulation, has no constitutive proton transporter activity and has to be activated by long-chain fatty acids/LCFAs. Inhibited by purine nucleotides. Both purine nucleotides and LCFAs bind the cytosolic side of the transporter and directly compete to activate or inhibit it. Activated by noradrenaline and reactive oxygen species. Despite lacking canonical translational encoding for selenocysteine, a small pool of the protein has been observed to selectively incorporate selenocysteine at 'Cys-256'. Selenocysteine-modified protein is highly sensitive to redox modification and may constitute a pool of protein highly sensitive to activation by elevated levels of reactive oxygen species (ROS). Mitochondrial protein responsible for thermogenic respiration, a specialized capacity of brown adipose tissue and beige fat that participates in non-shivering adaptive thermogenesis to temperature and diet variations and more generally to the regulation of energy balance. Functions as a long-chain fatty acid/LCFA and proton symporter, simultaneously transporting one LCFA and one proton through the inner mitochondrial membrane. However, LCFAs remaining associated with the transporter via their hydrophobic tails, it results in an apparent transport of protons activated by LCFAs. Thereby, dissipates the mitochondrial proton gradient and converts the energy of substrate oxydation into heat instead of ATP. Regulates the production of reactive oxygen species/ROS by mitochondria. In Canis lupus familiaris (Dog), this protein is Mitochondrial brown fat uncoupling protein 1.